Consider the following 615-residue polypeptide: Zinc metalloproteinase R519 (615 aa).

Residues 1-611 (MTYRSCIPQN…LDPQLRSRIL (611 aa)) form the Peptidase M13 domain. A Zn(2+)-binding site is contributed by H454. E455 is an active-site residue. Positions 458 and 513 each coordinate Zn(2+). Residue D517 is the Proton donor of the active site.

Belongs to the peptidase M13 family. The cofactor is Zn(2+).

In terms of biological role, zinc metalloprotease. The chain is Zinc metalloproteinase R519 from Acanthamoeba polyphaga (Amoeba).